A 243-amino-acid chain; its full sequence is tRNA pseudouridine synthase A (243 aa).

Aspartate 53 acts as the Nucleophile in catalysis. Substrate is bound at residue tyrosine 111.

The protein belongs to the tRNA pseudouridine synthase TruA family. In terms of assembly, homodimer.

The catalysed reaction is uridine(38/39/40) in tRNA = pseudouridine(38/39/40) in tRNA. Functionally, formation of pseudouridine at positions 38, 39 and 40 in the anticodon stem and loop of transfer RNAs. This is tRNA pseudouridine synthase A from Chlorobium limicola (strain DSM 245 / NBRC 103803 / 6330).